Reading from the N-terminus, the 262-residue chain is Flap endonuclease Xni (262 aa).

Residue aspartate 109 participates in Mg(2+) binding. In terms of domain architecture, 5'-3' exonuclease spans 165 to 255 (LKPEQLADYW…FNLQDIRYEK (91 aa)). Residues leucine 176, alanine 177, isoleucine 187, and valine 190 each contribute to the K(+) site. Residues 189 to 194 (GVGPKA) are interaction with DNA.

The protein belongs to the Xni family. It depends on Mg(2+) as a cofactor. K(+) is required as a cofactor.

Functionally, has flap endonuclease activity. During DNA replication, flap endonucleases cleave the 5'-overhanging flap structure that is generated by displacement synthesis when DNA polymerase encounters the 5'-end of a downstream Okazaki fragment. The sequence is that of Flap endonuclease Xni from Aliivibrio fischeri (strain MJ11) (Vibrio fischeri).